A 492-amino-acid polypeptide reads, in one-letter code: Transmembrane protein 104 homolog (492 aa).

Over 1–18 (MQSNTDSSGTSGTYSQTV) the chain is Cytoplasmic. A helical transmembrane segment spans residues 19-39 (GLLYVFNLIVGTGALALPKAF). Residues 40–45 (QSAGWL) are Extracellular-facing. Residues 46–66 (LSISLLTFSAFMSYVAATFVI) form a helical membrane-spanning segment. The Cytoplasmic segment spans residues 67–114 (EALSVANAVLSKKRRVEYDDVVVADGPSTFEIAKKVEVSEMASMFLSK). The chain crosses the membrane as a helical span at residues 115 to 135 (VSLVFSYFAIIIYLFGDLAIY). Over 136-177 (STTVPKSAMNIVCSTINATIVKSSDPCHESWPEILTRMTVYR) the chain is Extracellular. Residue N152 is glycosylated (N-linked (GlcNAc...) asparagine). Residues 178–198 (FFVIVFVVVVCLPMVIAGITK) traverse the membrane as a helical segment. Residues 199-210 (TRHIQIMTTLSR) lie on the Cytoplasmic side of the membrane. The chain crosses the membrane as a helical span at residues 211-231 (WAAFILMISLATMQLSSQGAA). Topologically, residues 232-238 (AHPPAYN) are extracellular. A helical membrane pass occupies residues 239–259 (FHGFGSLFGCAVYAFMCHHSI). Topologically, residues 260–275 (PSLITPMRTKENVFGK) are cytoplasmic. A helical transmembrane segment spans residues 276 to 296 (IAVVYGIVGVFYFTLSLTGAF). Over 297-325 (AFEHVQDIYTLNFLHDDNTSLVYSIIDYF) the chain is Extracellular. N-linked (GlcNAc...) asparagine glycosylation occurs at N314. A helical membrane pass occupies residues 326-346 (LALFPIITLTSSYPIIALTLI). Over 347 to 391 (NNFKVVKDILCPKTGQENESLLEADNQVEDNDTDDEREARNGNPK) the chain is Cytoplasmic. Residues 367–382 (LLEADNQVEDNDTDDE) show a composition bias toward acidic residues. The segment at 367–387 (LLEADNQVEDNDTDDEREARN) is disordered. A helical membrane pass occupies residues 392-412 (TIFDVLVPTLVLALPTFLSLL). At 413 to 415 (TDD) the chain is on the extracellular side. The chain crosses the membrane as a helical span at residues 416 to 436 (MLLLASITGSFPGVAVQFAIP). The Cytoplasmic portion of the chain corresponds to 437–466 (CLLVTAARKHARSVLNFPVPRKNNSPFQSR). Residues 467 to 487 (FWIMLISSWAGFSMIMVLLNL) traverse the membrane as a helical segment. The Extracellular portion of the chain corresponds to 488 to 492 (VGVKF).

The protein belongs to the TMEM104 family.

It is found in the membrane. The polypeptide is Transmembrane protein 104 homolog (Caenorhabditis briggsae).